The following is a 155-amino-acid chain: Ribosome maturation factor RimP (155 aa).

It belongs to the RimP family.

Its subcellular location is the cytoplasm. Required for maturation of 30S ribosomal subunits. The sequence is that of Ribosome maturation factor RimP from Bacteroides fragilis (strain ATCC 25285 / DSM 2151 / CCUG 4856 / JCM 11019 / LMG 10263 / NCTC 9343 / Onslow / VPI 2553 / EN-2).